An 81-amino-acid chain; its full sequence is Sulfur carrier protein TusA (81 aa).

The active-site Cysteine persulfide intermediate is Cys19.

This sequence belongs to the sulfur carrier protein TusA family.

The protein resides in the cytoplasm. Functionally, sulfur carrier protein which probably makes part of a sulfur-relay system. The chain is Sulfur carrier protein TusA from Shewanella sp. (strain ANA-3).